The sequence spans 277 residues: MTNTQTEIINELKVSPAIDVAKEVEFRVQFLVDYLRASHAKGFVLGISGGQDSTLAGRLAQLAVERIRAEENSTDYVFYAVRLPYAIQADEDDAQVALEFIAPDKSVTVNVKDATDATEATVAAALELPELTDFNRGNIKARQRMVAQYAIAGQYGLLVIGTDHAAENVTGFFTKFGDGAADLLPLAGLSKRQGAAILEHLGAPSSTWTKIPTADLEEDRPALPDEEALGVSYADIDNYLENKPDVSEGAQQRIEHLWKVGQHKRHLPVTPQEDWWR.

Residue 46–53 (GISGGQDS) coordinates ATP. Residue Asp52 coordinates Mg(2+). Arg142 lines the deamido-NAD(+) pocket. Thr162 is a binding site for ATP. Glu167 lines the Mg(2+) pocket. Residues Lys175 and Asp182 each contribute to the deamido-NAD(+) site. Residues Lys191 and Thr213 each contribute to the ATP site. 263 to 264 (HK) lines the deamido-NAD(+) pocket.

This sequence belongs to the NAD synthetase family. As to quaternary structure, homodimer.

The catalysed reaction is deamido-NAD(+) + NH4(+) + ATP = AMP + diphosphate + NAD(+) + H(+). The protein operates within cofactor biosynthesis; NAD(+) biosynthesis; NAD(+) from deamido-NAD(+) (ammonia route): step 1/1. In terms of biological role, catalyzes the ATP-dependent amidation of deamido-NAD to form NAD. Uses ammonia as a nitrogen source. In Corynebacterium glutamicum (strain R), this protein is NH(3)-dependent NAD(+) synthetase.